An 861-amino-acid chain; its full sequence is Leucine--tRNA ligase (861 aa).

Residues 42–52 (PYPSGRIHMGH) carry the 'HIGH' region motif. The 'KMSKS' region motif lies at 623–627 (KMSKS). Residue K626 participates in ATP binding.

This sequence belongs to the class-I aminoacyl-tRNA synthetase family.

It is found in the cytoplasm. It carries out the reaction tRNA(Leu) + L-leucine + ATP = L-leucyl-tRNA(Leu) + AMP + diphosphate. This chain is Leucine--tRNA ligase, found in Caulobacter vibrioides (strain ATCC 19089 / CIP 103742 / CB 15) (Caulobacter crescentus).